Reading from the N-terminus, the 404-residue chain is Probable tRNA sulfurtransferase (404 aa).

The THUMP domain occupies 60–165; the sequence is QPVVEALKLV…DEAAYISYEE (106 aa). ATP is bound by residues 183 to 184, 208 to 209, arginine 265, glycine 287, and glutamine 296; these read ML and HF.

It belongs to the ThiI family.

It is found in the cytoplasm. The enzyme catalyses [ThiI sulfur-carrier protein]-S-sulfanyl-L-cysteine + a uridine in tRNA + 2 reduced [2Fe-2S]-[ferredoxin] + ATP + H(+) = [ThiI sulfur-carrier protein]-L-cysteine + a 4-thiouridine in tRNA + 2 oxidized [2Fe-2S]-[ferredoxin] + AMP + diphosphate. It carries out the reaction [ThiS sulfur-carrier protein]-C-terminal Gly-Gly-AMP + S-sulfanyl-L-cysteinyl-[cysteine desulfurase] + AH2 = [ThiS sulfur-carrier protein]-C-terminal-Gly-aminoethanethioate + L-cysteinyl-[cysteine desulfurase] + A + AMP + 2 H(+). It participates in cofactor biosynthesis; thiamine diphosphate biosynthesis. Its function is as follows. Catalyzes the ATP-dependent transfer of a sulfur to tRNA to produce 4-thiouridine in position 8 of tRNAs, which functions as a near-UV photosensor. Also catalyzes the transfer of sulfur to the sulfur carrier protein ThiS, forming ThiS-thiocarboxylate. This is a step in the synthesis of thiazole, in the thiamine biosynthesis pathway. The sulfur is donated as persulfide by IscS. The protein is Probable tRNA sulfurtransferase of Streptococcus pyogenes serotype M6 (strain ATCC BAA-946 / MGAS10394).